A 70-amino-acid chain; its full sequence is ATP synthase subunit c (70 aa).

2 helical membrane passes run 5–25 (AAAIAIGLAALGAGIGNGLIV) and 47–67 (FIGVALVEAIPIIAVVIAFMV).

Belongs to the ATPase C chain family. In terms of assembly, F-type ATPases have 2 components, F(1) - the catalytic core - and F(0) - the membrane proton channel. F(1) has five subunits: alpha(3), beta(3), gamma(1), delta(1), epsilon(1). F(0) has three main subunits: a(1), b(2) and c(10-14). The alpha and beta chains form an alternating ring which encloses part of the gamma chain. F(1) is attached to F(0) by a central stalk formed by the gamma and epsilon chains, while a peripheral stalk is formed by the delta and b chains.

It is found in the cell membrane. Functionally, f(1)F(0) ATP synthase produces ATP from ADP in the presence of a proton or sodium gradient. F-type ATPases consist of two structural domains, F(1) containing the extramembraneous catalytic core and F(0) containing the membrane proton channel, linked together by a central stalk and a peripheral stalk. During catalysis, ATP synthesis in the catalytic domain of F(1) is coupled via a rotary mechanism of the central stalk subunits to proton translocation. In terms of biological role, key component of the F(0) channel; it plays a direct role in translocation across the membrane. A homomeric c-ring of between 10-14 subunits forms the central stalk rotor element with the F(1) delta and epsilon subunits. The sequence is that of ATP synthase subunit c from Anoxybacillus flavithermus (strain DSM 21510 / WK1).